We begin with the raw amino-acid sequence, 313 residues long: Beta-lactamase FAR-1 (313 aa).

The first 28 residues, 1–28, serve as a signal peptide directing secretion; it reads MPGVDISFLKKSGRRTMAAAAVIALLGG. C29 carries N-palmitoyl cysteine lipidation. A lipid anchor (S-diacylglycerol cysteine) is attached at C29. The active-site Acyl-ester intermediate is S94. Substrate is bound at residue S154. The active-site Proton acceptor is E190. 258–260 serves as a coordination point for substrate; sequence KTG.

Belongs to the class-A beta-lactamase family.

It localises to the cell membrane. It carries out the reaction a beta-lactam + H2O = a substituted beta-amino acid. Its activity is regulated as follows. Inhibited by clavulanic acid, and at a low level by tazobactam and sulbactam. Confers high levels of resistance to amoxicillin, benzylpenicillin, piperacillin, ticarcillin and cephalothin. Also hydrolyzes aztreonam at a low level. Not active against ceftazidime, cefotaxime and imipenem. This chain is Beta-lactamase FAR-1 (bla), found in Nocardia farcinica (strain IFM 10152).